The following is a 727-amino-acid chain: 1,4-alpha-glucan branching enzyme GlgB (727 aa).

The Nucleophile role is filled by Asp-405. Catalysis depends on Glu-458, which acts as the Proton donor.

Belongs to the glycosyl hydrolase 13 family. GlgB subfamily. Monomer.

The catalysed reaction is Transfers a segment of a (1-&gt;4)-alpha-D-glucan chain to a primary hydroxy group in a similar glucan chain.. It participates in glycan biosynthesis; glycogen biosynthesis. In terms of biological role, catalyzes the formation of the alpha-1,6-glucosidic linkages in glycogen by scission of a 1,4-alpha-linked oligosaccharide from growing alpha-1,4-glucan chains and the subsequent attachment of the oligosaccharide to the alpha-1,6 position. The sequence is that of 1,4-alpha-glucan branching enzyme GlgB from Yersinia pseudotuberculosis serotype I (strain IP32953).